Reading from the N-terminus, the 167-residue chain is NADH-quinone oxidoreductase subunit B 2 (167 aa).

4 residues coordinate [4Fe-4S] cluster: C39, C40, C104, and C134.

Belongs to the complex I 20 kDa subunit family. NDH-1 is composed of 14 different subunits. Subunits NuoB, C, D, E, F, and G constitute the peripheral sector of the complex. It depends on [4Fe-4S] cluster as a cofactor.

It is found in the cell inner membrane. The enzyme catalyses a quinone + NADH + 5 H(+)(in) = a quinol + NAD(+) + 4 H(+)(out). Its function is as follows. NDH-1 shuttles electrons from NADH, via FMN and iron-sulfur (Fe-S) centers, to quinones in the respiratory chain. Couples the redox reaction to proton translocation (for every two electrons transferred, four hydrogen ions are translocated across the cytoplasmic membrane), and thus conserves the redox energy in a proton gradient. The polypeptide is NADH-quinone oxidoreductase subunit B 2 (Burkholderia mallei (strain NCTC 10247)).